Here is a 472-residue protein sequence, read N- to C-terminus: Bone morphogenetic protein 3 (472 aa).

An N-terminal signal peptide occupies residues 1-22; it reads MAGASRLLFLWLGCFCVSLAQG. The propeptide occupies 23-362; the sequence is ERPKPPFPEL…EQTLKKARRK (340 aa). The span at 27–37 shows a compositional bias: basic and acidic residues; the sequence is PPFPELRKAVP. A disordered region spans residues 27 to 53; that stretch reads PPFPELRKAVPGDRTAGGGPDSELQPQ. Residues Asn117, Asn141, Asn175, and Asn220 are each glycosylated (N-linked (GlcNAc...) asparagine). A disordered region spans residues 320–350; the sequence is PYKTLQAQAPEKSKNKKKQRKGPHRKSQTLQ. A compositionally biased stretch (basic residues) spans 333–346; that stretch reads KNKKKQRKGPHRKS. Cystine bridges form between Cys370–Cys437, Cys399–Cys469, and Cys403–Cys471. A glycan (N-linked (GlcNAc...) asparagine) is linked at Asn463.

This sequence belongs to the TGF-beta family. As to quaternary structure, homodimer; disulfide-linked. Interacts with type II receptor ACVR2B. As to expression, expressed in adult and fetal cartilage.

The protein localises to the secreted. Its function is as follows. Growth factor of the TGF-beta superfamily that plays an essential role in developmental process by inducing and patterning early skeletal formation and by negatively regulating bone density. Antagonizes the ability of certain osteogenic BMPs to induce osteoprogenitor differentiation and ossification. Initiates signaling cascades by associating with type II receptor ACVR2B to activate SMAD2-dependent and SMAD-independent signaling cascades including TAK1 and JNK pathways. This Homo sapiens (Human) protein is Bone morphogenetic protein 3 (BMP3).